The primary structure comprises 54 residues: Ovomucoid (54 aa).

One can recognise a Kazal-like domain in the interval Val4–Cys54. Disulfide bonds link Cys6/Cys36, Cys14/Cys33, and Cys22/Cys54. Residue Asn43 is glycosylated (N-linked (GlcNAc...) asparagine).

It localises to the secreted. This is Ovomucoid from Dendrocygna viduata (White-faced whistling-duck).